The sequence spans 306 residues: Porphobilinogen deaminase (306 aa).

Cys-241 carries the S-(dipyrrolylmethanemethyl)cysteine modification.

This sequence belongs to the HMBS family. Monomer. Dipyrromethane serves as cofactor.

It carries out the reaction 4 porphobilinogen + H2O = hydroxymethylbilane + 4 NH4(+). It functions in the pathway porphyrin-containing compound metabolism; protoporphyrin-IX biosynthesis; coproporphyrinogen-III from 5-aminolevulinate: step 2/4. In terms of biological role, tetrapolymerization of the monopyrrole PBG into the hydroxymethylbilane pre-uroporphyrinogen in several discrete steps. In Acidithiobacillus ferrooxidans (strain ATCC 23270 / DSM 14882 / CIP 104768 / NCIMB 8455) (Ferrobacillus ferrooxidans (strain ATCC 23270)), this protein is Porphobilinogen deaminase.